Consider the following 148-residue polypeptide: Lipid droplet organization protein LDO16 (148 aa).

Residues 1-7 (MVSTATF) are Cytoplasmic-facing. A helical transmembrane segment spans residues 8–28 (FFFVYLTLFVVIGFFSSLFII). A topological domain (lumenal) is located at residue proline 29. Residues 30–50 (LLGISFVFAIGVVSFGFCSNM) form a helical membrane-spanning segment. Topologically, residues 51-148 (SFKMAQLIYV…NKAGNKFQLS (98 aa)) are cytoplasmic. Positions 83–110 (QEPQEPLSTLRPVSNPTIPSPLRQTARP) are disordered. Residues 93–109 (RPVSNPTIPSPLRQTAR) are compositionally biased toward polar residues. Position 102 is a phosphoserine (serine 102).

Belongs to the OSW5 family. As to quaternary structure, interacts specifically with the seipin complex FLD1-LDB16. Only a fraction appears to associate with the seipin core components, suggesting that it may be an ancillary subunit of the complex. Found to interact with many mitochondrial and peroxisomal proteins.

Its subcellular location is the endoplasmic reticulum membrane. It is found in the lipid droplet. Functionally, involved in lipid droplet (LD) organization. Functions primarily upon nutrient depletion, facilitating LD consumption by lipophagy. Required for correct LD distribution during entry into stationary phase, where LDs accumulate at nucleus-vacuole junction (NVJ) contact sites. Involved in membrane interaction in a manner similar to those of SNARE proteins, binding to partners present in mitochondria or peroxisomes. Its partner on the mitochondrion side might be TOM22, a mitochondrial outer membrane protein, linking lipid droplets and mitochondria by protein-protein interaction. Involved in spore wall assembly. The polypeptide is Lipid droplet organization protein LDO16 (Saccharomyces cerevisiae (strain ATCC 204508 / S288c) (Baker's yeast)).